A 240-amino-acid chain; its full sequence is Methylthioribulose-1-phosphate dehydratase (240 aa).

Substrate is bound at residue C99. H116 and H118 together coordinate Zn(2+). The active-site Proton donor/acceptor is E145. Residue H201 participates in Zn(2+) binding.

This sequence belongs to the aldolase class II family. MtnB subfamily. Zn(2+) serves as cofactor.

Its subcellular location is the cytoplasm. The catalysed reaction is 5-(methylsulfanyl)-D-ribulose 1-phosphate = 5-methylsulfanyl-2,3-dioxopentyl phosphate + H2O. It functions in the pathway amino-acid biosynthesis; L-methionine biosynthesis via salvage pathway; L-methionine from S-methyl-5-thio-alpha-D-ribose 1-phosphate: step 2/6. Catalyzes the dehydration of methylthioribulose-1-phosphate (MTRu-1-P) into 2,3-diketo-5-methylthiopentyl-1-phosphate (DK-MTP-1-P). The polypeptide is Methylthioribulose-1-phosphate dehydratase (Ajellomyces capsulatus (strain G186AR / H82 / ATCC MYA-2454 / RMSCC 2432) (Darling's disease fungus)).